Reading from the N-terminus, the 246-residue chain is Major pollen allergen Cyn d 1 (246 aa).

The N-linked (GlcNAc...) asparagine glycan is linked to Asn-9. The 107-residue stretch at 39 to 145 folds into the Expansin-like EG45 domain; it reads GGACGYKDVD…RRVKCKYPSG (107 aa). An Expansin-like CBD domain is found at 159 to 240; sequence HYLALLVKYA…NWKPDTVYTS (82 aa).

Belongs to the expansin family. Expansin B subfamily.

The protein localises to the secreted. The polypeptide is Major pollen allergen Cyn d 1 (CYND1) (Cynodon dactylon (Bermuda grass)).